Here is a 122-residue protein sequence, read N- to C-terminus: MQWWNMKTSSRKCLKSMKGKFSQKNTGTATVFKPKTPSFRCFLTNRQKMTPYFGLPLKPDWSSPTQRPIGKSTLKRGQWEKCCLNHTSGPCTCQRCPFPLRRIFGTRACMRCKRPTCPSLKT.

This is an uncharacterized protein from Carica papaya (Papaya).